The chain runs to 715 residues: Photosystem I P700 chlorophyll a apoprotein A1 (715 aa).

8 helical membrane passes run 60-83, 146-169, 185-209, 281-299, 336-359, 375-401, 423-445, and 521-539; these read VFSA…FHGA, LYST…FHYH, LNHH…HVSL, TVHH…GHMY, WHAQ…HHMY, LSLF…IFMV, AIIS…LYIH, and FLVH…LILL. [4Fe-4S] cluster-binding residues include cysteine 563 and cysteine 572. 2 helical membrane-spanning segments follow: residues 579 to 600 and 654 to 676; these read HVFL…HFSW and LSAY…MFLF. Chlorophyll a' is bound at residue histidine 665. Positions 673 and 681 each coordinate chlorophyll a. Tryptophan 682 serves as a coordination point for phylloquinone. A helical transmembrane segment spans residues 714–715; it reads AE.

Belongs to the PsaA/PsaB family. As to quaternary structure, the PsaA/B heterodimer binds the P700 chlorophyll special pair and subsequent electron acceptors. PSI consists of a core antenna complex that captures photons, and an electron transfer chain that converts photonic excitation into a charge separation. The eukaryotic PSI reaction center is composed of at least 11 subunits. P700 is a chlorophyll a/chlorophyll a' dimer, A0 is one or more chlorophyll a, A1 is one or both phylloquinones and FX is a shared 4Fe-4S iron-sulfur center. is required as a cofactor.

It is found in the plastid. It localises to the chloroplast thylakoid membrane. The enzyme catalyses reduced [plastocyanin] + hnu + oxidized [2Fe-2S]-[ferredoxin] = oxidized [plastocyanin] + reduced [2Fe-2S]-[ferredoxin]. PsaA and PsaB bind P700, the primary electron donor of photosystem I (PSI), as well as the electron acceptors A0, A1 and FX. PSI is a plastocyanin-ferredoxin oxidoreductase, converting photonic excitation into a charge separation, which transfers an electron from the donor P700 chlorophyll pair to the spectroscopically characterized acceptors A0, A1, FX, FA and FB in turn. Oxidized P700 is reduced on the lumenal side of the thylakoid membrane by plastocyanin. The sequence is that of Photosystem I P700 chlorophyll a apoprotein A1 from Phlegmariurus squarrosus (Rock tassel fern).